We begin with the raw amino-acid sequence, 387 residues long: G-protein coupled receptor homolog R33 (387 aa).

The Extracellular portion of the chain corresponds to methionine 1–arginine 33. Asparagine 20 is a glycosylation site (N-linked (GlcNAc...) asparagine; by host). A helical membrane pass occupies residues aspartate 34–serine 61. At asparagine 62–threonine 71 the chain is on the cytoplasmic side. A helical transmembrane segment spans residues leucine 72–serine 94. Residues asparagine 95–lysine 107 are Extracellular-facing. The chain crosses the membrane as a helical span at residues isoleucine 108–isoleucine 129. Residues asparagine 130–tyrosine 150 are Cytoplasmic-facing. The chain crosses the membrane as a helical span at residues alanine 151 to leucine 169. Over tyrosine 170 to lysine 204 the chain is Extracellular. Residues isoleucine 205 to valine 224 form a helical membrane-spanning segment. Topologically, residues phenylalanine 225–phenylalanine 244 are cytoplasmic. A helical membrane pass occupies residues valine 245–tyrosine 268. Over glycine 269 to alanine 285 the chain is Extracellular. The chain crosses the membrane as a helical span at residues valine 286–glycine 309. The Cytoplasmic segment spans residues arginine 310 to cysteine 387. A disordered region spans residues arginine 368–cysteine 387. The span at arginine 374 to cysteine 387 shows a compositional bias: pro residues.

This sequence belongs to the G-protein coupled receptor 1 family.

It is found in the host cell membrane. In terms of biological role, plays an important role in vivo, in particular in the dissemination to or replication in the salivary gland. In Rattus, this protein is G-protein coupled receptor homolog R33.